Here is a 534-residue protein sequence, read N- to C-terminus: Lysophosphatidylcholine acyltransferase 1 (534 aa).

Residues 1-22 (MRLRGCGPRAAPASSAGASDAR) form a disordered region. Residues 1–57 (MRLRGCGPRAAPASSAGASDARLLAPPGRNPFVHELRLSALQKAQVALMTLTLFPVR) are Cytoplasmic-facing. The span at 7 to 22 (GPRAAPASSAGASDAR) shows a compositional bias: low complexity. A helical; Signal-anchor for type II membrane protein transmembrane segment spans residues 58–78 (LLVAAAMMLLAWPLALVASLG). Residues 79–534 (SAEKEPEQPP…GRKPVRKKLD (456 aa)) are Lumenal-facing. Residues 135 to 140 (HSSYFD) carry the HXXXXD motif motif. EF-hand domains are found at residues 379–414 (PVSD…VCRP) and 451–486 (VAEL…YPAF). The Ca(2+) site is built by Asp392, Ser394, Ser396, Glu398, and Glu403. The segment at 512 to 534 (GFCADFSPENSDAGRKPVRKKLD) is disordered. Residues 523-534 (DAGRKPVRKKLD) are compositionally biased toward basic and acidic residues. Residues 531-534 (KKLD) carry the Di-lysine motif motif.

The protein belongs to the 1-acyl-sn-glycerol-3-phosphate acyltransferase family. As to expression, erythrocytes.

It localises to the endoplasmic reticulum membrane. The protein resides in the golgi apparatus membrane. The protein localises to the cell membrane. Its subcellular location is the lipid droplet. The enzyme catalyses a 1-acyl-sn-glycero-3-phosphocholine + an acyl-CoA = a 1,2-diacyl-sn-glycero-3-phosphocholine + CoA. It carries out the reaction a 1-acyl-sn-glycero-3-phosphate + an acyl-CoA = a 1,2-diacyl-sn-glycero-3-phosphate + CoA. The catalysed reaction is a 1-O-alkyl-sn-glycero-3-phosphocholine + acetyl-CoA = a 1-O-alkyl-2-acetyl-sn-glycero-3-phosphocholine + CoA. It catalyses the reaction a 1-O-(1Z-alkenyl)-sn-glycero-3-phosphocholine + an acyl-CoA = a 1-O-(1Z-alkenyl)-2-acyl-sn-glycero-3-phosphocholine + CoA. The enzyme catalyses 1-acyl-sn-glycero-3-phospho-(1'-sn-glycerol) + an acyl-CoA = a 1,2-diacyl-sn-glycero-3-phospho-(1'-sn-glycerol) + CoA. It carries out the reaction 1-hexadecanoyl-sn-glycero-3-phosphocholine + (9Z)-octadecenoyl-CoA = 1-hexadecanoyl-2-(9Z-octadecenoyl)-sn-glycero-3-phosphocholine + CoA. The catalysed reaction is 1-hexadecanoyl-sn-glycero-3-phosphocholine + hexadecanoyl-CoA = 1,2-dihexadecanoyl-sn-glycero-3-phosphocholine + CoA. It catalyses the reaction 1-O-hexadecyl-sn-glycero-3-phosphocholine + hexadecanoyl-CoA = 1-O-hexadecyl-2-hexadecanoyl-sn-glycero-3-phosphocholine + CoA. The enzyme catalyses a 1-O-(1Z-alkenyl)-sn-glycero-3-phosphocholine + hexadecanoyl-CoA = 1-O-(1Z)-alkenyl-2-hexadecanoyl-sn-glycero-3-phosphocholine + CoA. It carries out the reaction 1-hexadecanoyl-sn-glycero-3-phospho-(1'-sn-glycerol) + hexadecanoyl-CoA = 1,2-dihexadecanoyl-sn-glycero-3-phospho-(1'-sn-glycerol) + CoA. The catalysed reaction is 1-dodecanoyl-sn-glycero-3-phosphocholine + hexadecanoyl-CoA = 1-dodecanoyl-2-hexadecanoyl-sn-glycero-3-phosphocholine + CoA. It catalyses the reaction 1-tetradecanoyl-sn-glycero-3-phosphocholine + hexadecanoyl-CoA = 1-tetradecanoyl-2-hexadecanoyl-sn-glycero-3-phosphocholine + CoA. The enzyme catalyses 1-O-octadecyl-sn-glycero-3-phosphocholine + hexadecanoyl-CoA = 1-O-octadecyl-2-hexadecanoyl-sn-glycero-3-phosphocholine + CoA. It carries out the reaction 1-octadecanoyl-sn-glycero-3-phosphocholine + hexadecanoyl-CoA = 1-octadecanoyl-2-hexadecanoyl-sn-glycero-3-phosphocholine + CoA. The catalysed reaction is 1-(9Z-octadecenoyl)-sn-glycero-3-phosphocholine + hexadecanoyl-CoA = 1-(9Z-octadecenoyl)-2-hexadecanoyl-sn-glycero-3-phosphocholine + CoA. It catalyses the reaction 1-eicosanoyl-sn-glycero-3-phosphocholine + hexadecanoyl-CoA = 1-eicosanoyl-2-hexadecanoyl-sn-glycero-3-phosphocholine + CoA. The enzyme catalyses hexanoyl-CoA + 1-hexadecanoyl-sn-glycero-3-phosphocholine = 1-hexadecanoyl-2-hexanoyl-sn-glycero-3-phosphocholine + CoA. It carries out the reaction octanoyl-CoA + 1-hexadecanoyl-sn-glycero-3-phosphocholine = 1-hexadecanoyl-2-octanoyl-sn-glycero-3-phosphocholine + CoA. The catalysed reaction is decanoyl-CoA + 1-hexadecanoyl-sn-glycero-3-phosphocholine = 1-hexadecanoyl-2-decanoyl-sn-glycero-3-phosphocholine + CoA. It catalyses the reaction dodecanoyl-CoA + 1-hexadecanoyl-sn-glycero-3-phosphocholine = 1-hexadecanoyl-2-dodecanoyl-sn-glycero-3-phosphocholine + CoA. The enzyme catalyses tetradecanoyl-CoA + 1-hexadecanoyl-sn-glycero-3-phosphocholine = 1-hexadecanoyl-2-tetradecanoyl-sn-glycero-3-phosphocholine + CoA. It carries out the reaction (9Z,12Z)-octadecadienoyl-CoA + 1-hexadecanoyl-sn-glycero-3-phosphocholine = 1-hexadecanoyl-2-(9Z,12Z-octadecadienoyl)-sn-glycero-3-phosphocholine + CoA. The catalysed reaction is (4Z,7Z,10Z,13Z,16Z,19Z)-docosahexaenoyl-CoA + 1-hexadecanoyl-sn-glycero-3-phosphocholine = 1-hexadecanoyl-2-(4Z,7Z,10Z,13Z,16Z,19Z-docosahexaenoyl)-sn-glycero-3-phosphocholine + CoA. It catalyses the reaction 1-hexadecanoyl-sn-glycero-3-phosphocholine + acetyl-CoA = 1-hexadecanoyl-2-acetyl-sn-glycero-3-phosphocholine + CoA. The enzyme catalyses eicosanoyl-CoA + 1-hexadecanoyl-sn-glycero-3-phosphocholine = 1-hexadecanoyl-2-eicosanoyl-sn-glycero-3-phosphocholine + CoA. It carries out the reaction 1-O-hexadecyl-sn-glycero-3-phosphocholine + acetyl-CoA = 1-O-hexadecyl-2-acetyl-sn-glycero-3-phosphocholine + CoA. The catalysed reaction is a 1-acyl-sn-glycero-3-phosphocholine + hexadecanoyl-CoA = 1-acyl-2-hexadecanoyl-sn-glycero-3-phosphocholine + CoA. It catalyses the reaction a 1-acyl-sn-glycero-3-phosphate + hexadecanoyl-CoA = 1-acyl-2-hexadecanoyl-sn-glycero-3-phosphate + CoA. The enzyme catalyses 1-acyl-sn-glycero-3-phospho-(1'-sn-glycerol) + hexadecanoyl-CoA = 1-acyl-2-hexadecanoyl-sn-glycero-3-phospho-(1'-sn-glycerol) + CoA. It functions in the pathway lipid metabolism; phospholipid metabolism. Its function is as follows. Exhibits acyltransferase activity. Exhibits acetyltransferase activity. Activity is calcium-independent. Catalyzes the conversion of lysophosphatidylcholine (1-acyl-sn-glycero-3-phosphocholine or LPC) into phosphatidylcholine (1,2-diacyl-sn-glycero-3-phosphocholine or PC). Catalyzes the conversion 1-acyl-sn-glycerol-3-phosphate (lysophosphatidic acid or LPA) into 1,2-diacyl-sn-glycerol-3-phosphate (phosphatidic acid or PA) by incorporating an acyl moiety at the sn-2 position of the glycerol backbone. Displays a clear preference for saturated fatty acyl-CoAs, and 1-myristoyl or 1-palmitoyl LPC as acyl donors and acceptors, respectively. Involved in platelet-activating factor (PAF) biosynthesis by catalyzing the conversion of the PAF precursor, 1-O-alkyl-sn-glycero-3-phosphocholine (lyso-PAF) into 1-O-alkyl-2-acetyl-sn-glycero-3-phosphocholine (PAF). May synthesize phosphatidylcholine in pulmonary surfactant, thereby playing a pivotal role in respiratory physiology. Involved in the regulation of lipid droplet number and size. In Homo sapiens (Human), this protein is Lysophosphatidylcholine acyltransferase 1 (LPCAT1).